The following is a 261-amino-acid chain: MNDEICLTGGGRTTVTRRGGVVYREGGPWSSTVISLLRHLEASGFAEAPSVVGTGFDERGRETLSFIEGEFVHPGPWSEEAFPQFGMMLRRLHDATASFKPPENSMWRDWFGRNLGEGQHVIGHCDTGPWNIVCRSGLPVGLIDWEVAGPVRADIELAQACWLNAQLYDDDIAERVGLGSVTMRAHQVRLLLDGYGLSRKQRGGFVDKLITFAVHDAAEQAKEAAVTPESNDAEPLWAIAWRTRSASWMLHHRQTLEAALA.

Required for TFX resistance. This is Trifolitoxin immunity protein (tfxG) from Rhizobium leguminosarum bv. trifolii.